A 689-amino-acid polypeptide reads, in one-letter code: Pyocin-S2 (689 aa).

Residues H656, H681, and H685 each contribute to the Zn(2+) site.

The protein belongs to the colicin/pyosin nuclease family. Purified pyocin S2 makes up a complex of the two (large and small) proteins. The large protein, but not the pyocin complex, shows in vitro DNase activity.

In terms of biological role, causes breakdown of chromosomal DNA as well as complete inhibition of lipid synthesis in sensitive cells. In Pseudomonas aeruginosa (strain ATCC 15692 / DSM 22644 / CIP 104116 / JCM 14847 / LMG 12228 / 1C / PRS 101 / PAO1), this protein is Pyocin-S2 (pys2).